A 625-amino-acid chain; its full sequence is Phosphomethylpyrimidine synthase (625 aa).

Substrate contacts are provided by residues asparagine 230, methionine 259, tyrosine 288, histidine 324, 344 to 346, 385 to 388, and glutamate 424; these read SRG and DGLR. Histidine 428 serves as a coordination point for Zn(2+). A substrate-binding site is contributed by tyrosine 451. Histidine 492 contributes to the Zn(2+) binding site. The [4Fe-4S] cluster site is built by cysteine 572, cysteine 575, and cysteine 580.

This sequence belongs to the ThiC family. Homodimer. It depends on [4Fe-4S] cluster as a cofactor.

It carries out the reaction 5-amino-1-(5-phospho-beta-D-ribosyl)imidazole + S-adenosyl-L-methionine = 4-amino-2-methyl-5-(phosphooxymethyl)pyrimidine + CO + 5'-deoxyadenosine + formate + L-methionine + 3 H(+). The protein operates within cofactor biosynthesis; thiamine diphosphate biosynthesis. Catalyzes the synthesis of the hydroxymethylpyrimidine phosphate (HMP-P) moiety of thiamine from aminoimidazole ribotide (AIR) in a radical S-adenosyl-L-methionine (SAM)-dependent reaction. The sequence is that of Phosphomethylpyrimidine synthase from Xanthomonas axonopodis pv. citri (strain 306).